A 456-amino-acid chain; its full sequence is NADPH-ferredoxin reductase FprA (456 aa).

Residues Ser17, Glu43, Leu51, and Val87 each coordinate FAD. NADP(+) contacts are provided by residues Arg113, 158-161 (NGNV), 202-203 (RR), and Glu214. Residues Trp362 and 369-371 (GVI) each bind FAD. Position 369 (Gly369) interacts with NADP(+).

This sequence belongs to the ferredoxin--NADP reductase type 1 family. Monomer. It depends on FAD as a cofactor.

The catalysed reaction is 2 reduced [2Fe-2S]-[ferredoxin] + NADP(+) + H(+) = 2 oxidized [2Fe-2S]-[ferredoxin] + NADPH. Functionally, may serve as electron transfer protein and supply electrons to P450 systems. This is NADPH-ferredoxin reductase FprA (fprA) from Mycobacterium leprae (strain TN).